The following is a 542-amino-acid chain: MAKQILFDRDAREKLKKGVDALADAVKVTLGPKGRNVILDKKFGSPAITKDGVSVAKDIELKDAIENMGAQLVKEVASKTADQAGDGTTTATVLTQAIFNAGLKNVAAGANPMDLKRGIDKAVSAIIADLKVQSKKISNSNEIAQVATISANNDHEIGKMIAHAMDKVGKDGVITVEEAKGTETEVKTVEGMQFDRGYLSPYFVTNTDKMEVELDRPYILIYDKKVSSMKELLPILEQVVQSGRPLLIIAEDVDGEALATLVVNKIRGALKIAAVKAPGFGDRRKAMLEDIAILTGGTVISEESGYKLENATLEYLGTAEKINIDKDNTTVVNGSGLKDNIVARVNQIKSQMENTTSDYDREKLQERLAKLSGGVAIMYIGAATEVEMKEKKDRVDDALHATRAAVEEGIVPGGGVALIRAGAALDNVAFHNEDEKTGIQIIRTAIESPLRAIVYNAGLEGSVIVQKVKEGTGDYGYNAREDRYEAMIAAGIIDPTKVTRLALENAASVASLLLTTECVVADEPEEKSAMPPMGGGGMGGMM.

ATP-binding positions include 29–32, K50, 86–90, G414, and D494; these read TLGP and DGTTT.

It belongs to the chaperonin (HSP60) family. Forms a cylinder of 14 subunits composed of two heptameric rings stacked back-to-back. Interacts with the co-chaperonin GroES.

The protein resides in the cytoplasm. It carries out the reaction ATP + H2O + a folded polypeptide = ADP + phosphate + an unfolded polypeptide.. Together with its co-chaperonin GroES, plays an essential role in assisting protein folding. The GroEL-GroES system forms a nano-cage that allows encapsulation of the non-native substrate proteins and provides a physical environment optimized to promote and accelerate protein folding. The chain is Chaperonin GroEL from Cytophaga hutchinsonii (strain ATCC 33406 / DSM 1761 / CIP 103989 / NBRC 15051 / NCIMB 9469 / D465).